The primary structure comprises 292 residues: NAD kinase (292 aa).

Catalysis depends on aspartate 73, which acts as the Proton acceptor. NAD(+) contacts are provided by residues 73–74 (DG), 147–148 (NE), histidine 158, arginine 175, aspartate 177, 188–193 (TAYSLS), and glutamine 247.

Belongs to the NAD kinase family. It depends on a divalent metal cation as a cofactor.

It is found in the cytoplasm. It carries out the reaction NAD(+) + ATP = ADP + NADP(+) + H(+). Functionally, involved in the regulation of the intracellular balance of NAD and NADP, and is a key enzyme in the biosynthesis of NADP. Catalyzes specifically the phosphorylation on 2'-hydroxyl of the adenosine moiety of NAD to yield NADP. The protein is NAD kinase of Enterobacter sp. (strain 638).